A 225-amino-acid chain; its full sequence is Interleukin-6 (225 aa).

Residues 1-24 (MPSRLNVFWLCAAALAALLRCAPA) form the signal peptide. N98 is a glycosylation site (N-linked (GlcNAc...) asparagine).

This sequence belongs to the IL-6 superfamily. As to quaternary structure, component of a hexamer of two molecules each of IL6, IL6R and IL6ST; first binds to IL6R to associate with the signaling subunit IL6ST. As to expression, expressed in white muscle, skin, spleen, anterior intestine and stomach. Not expressed in brain, gill, head kidney, posterior intestine and adipose tissue.

The protein localises to the secreted. In terms of biological role, cytokine with a wide variety of biological functions in immunity, tissue regeneration, and metabolism. Binds to IL6R, then the complex associates to the signaling subunit IL6ST/gp130 to trigger the intracellular IL6-signaling pathway. The interaction with the membrane-bound IL6R and IL6ST stimulates 'classic signaling', whereas the binding of IL6 and soluble IL6R to IL6ST stimulates 'trans-signaling'. Alternatively, 'cluster signaling' occurs when membrane-bound IL6:IL6R complexes on transmitter cells activate IL6ST receptors on neighboring receiver cells. The chain is Interleukin-6 (il6) from Sparus aurata (Gilthead sea bream).